The chain runs to 762 residues: N,N-dimethylformamidase beta subunit (762 aa).

As to quaternary structure, heterotetramer of two DmfA1 (alpha) and two DmfA2 (beta) subunits.

The catalysed reaction is N,N-dimethylformamide + H2O = dimethylamine + formate. With respect to regulation, activity is slightly inhibited by Mg(2+) and Mn(2+), and slightly increased by Cu(2+). Activity is slightly inhibited by the chelating agents 8-hydroxyquinoline, ethylenediaminetetraacetate, o-phenanthroline and 2,2'-bipyridyl. Hydrolyzes N,N-dimethylformamide, and to a lesser extent N,N-dimethylacetamide and N,N-diethylacetamide. Has no activity against the substituted amides N-methylformamide, N-ethylformamide, N-ethylformamide and N-methylacetamide or the unsubstituted amides formamide, nicotinamide, acetoamide, benzamide, acetamide and acrylamide. In Alcaligenes sp, this protein is N,N-dimethylformamidase beta subunit.